The sequence spans 431 residues: Phosphomethylpyrimidine synthase (431 aa).

Substrate contacts are provided by residues N66, M95, Y124, H163, 185-187 (SRG), 226-229 (DGLR), and E265. Residue H269 participates in Zn(2+) binding. Residue Y292 participates in substrate binding. H333 contributes to the Zn(2+) binding site. The [4Fe-4S] cluster site is built by C408, C411, and C415.

The protein belongs to the ThiC family. The cofactor is [4Fe-4S] cluster.

It catalyses the reaction 5-amino-1-(5-phospho-beta-D-ribosyl)imidazole + S-adenosyl-L-methionine = 4-amino-2-methyl-5-(phosphooxymethyl)pyrimidine + CO + 5'-deoxyadenosine + formate + L-methionine + 3 H(+). The protein operates within cofactor biosynthesis; thiamine diphosphate biosynthesis. In terms of biological role, catalyzes the synthesis of the hydroxymethylpyrimidine phosphate (HMP-P) moiety of thiamine from aminoimidazole ribotide (AIR) in a radical S-adenosyl-L-methionine (SAM)-dependent reaction. The chain is Phosphomethylpyrimidine synthase from Dehalococcoides mccartyi (strain ATCC BAA-2100 / JCM 16839 / KCTC 5957 / BAV1).